Here is a 259-residue protein sequence, read N- to C-terminus: NADP-dependent 3-hydroxy acid dehydrogenase (259 aa).

I11 is a binding site for NADP(+). At S42 the chain carries Phosphoserine. Position 43 is a phosphothreonine (T43). NADP(+) is bound by residues D65, N92, R126, Y158, K162, and V191. Y158 functions as the Proton acceptor in the catalytic mechanism. Catalysis depends on K162, which acts as the Lowers pKa of active site Tyr.

The protein belongs to the short-chain dehydrogenases/reductases (SDR) family. Homotetramer.

The protein resides in the cytoplasm. The protein localises to the nucleus. It catalyses the reaction L-allo-threonine + NADP(+) = aminoacetone + CO2 + NADPH. Its function is as follows. NADP-dependent dehydrogenase with broad substrate specificity acting on 3-hydroxy acids. Catalyzes the NADP-dependent oxidation of L-allo-threonine to L-2-amino-3-keto-butyrate, which is spontaneously decarboxylated into aminoacetone. Also acts on D-threonine, L-serine, D-serine, D-3-hydroxyisobutyrate, L-3-hydroxyisobutyrate, D-glycerate and L-glycerate. The chain is NADP-dependent 3-hydroxy acid dehydrogenase from Schizosaccharomyces pombe (strain 972 / ATCC 24843) (Fission yeast).